An 875-amino-acid polypeptide reads, in one-letter code: Valine--tRNA ligase (875 aa).

The 'HIGH' region signature appears at 45–55 (PNVTGVLHMGH). A 'KMSKS' region motif is present at residues 524–528 (KMSKS). Residue lysine 527 coordinates ATP. Positions 803–837 (VKLLIDKTKELIRLEKQLEKYKMLKISVSKKLENE) form a coiled coil.

It belongs to the class-I aminoacyl-tRNA synthetase family. ValS type 1 subfamily. In terms of assembly, monomer.

It localises to the cytoplasm. It catalyses the reaction tRNA(Val) + L-valine + ATP = L-valyl-tRNA(Val) + AMP + diphosphate. Catalyzes the attachment of valine to tRNA(Val). As ValRS can inadvertently accommodate and process structurally similar amino acids such as threonine, to avoid such errors, it has a 'posttransfer' editing activity that hydrolyzes mischarged Thr-tRNA(Val) in a tRNA-dependent manner. The chain is Valine--tRNA ligase from Borrelia garinii subsp. bavariensis (strain ATCC BAA-2496 / DSM 23469 / PBi) (Borreliella bavariensis).